A 1131-amino-acid chain; its full sequence is Phytochrome A (1131 aa).

A disordered region spans residues Met1–Arg23. One can recognise a GAF domain in the interval Ser219 to Phe404. Cys324 contacts phytochromobilin. PAS domains follow at residues Val620–Arg690 and Val750–Glu834. One can recognise a Histidine kinase domain in the interval Tyr904–Ala1124.

This sequence belongs to the phytochrome family. As to quaternary structure, homodimer. Contains one covalently linked phytochromobilin chromophore.

Regulatory photoreceptor which exists in two forms that are reversibly interconvertible by light: the Pr form that absorbs maximally in the red region of the spectrum and the Pfr form that absorbs maximally in the far-red region. Photoconversion of Pr to Pfr induces an array of morphogenic responses, whereas reconversion of Pfr to Pr cancels the induction of those responses. Pfr controls the expression of a number of nuclear genes including those encoding the small subunit of ribulose-bisphosphate carboxylase, chlorophyll A/B binding protein, protochlorophyllide reductase, rRNA, etc. It also controls the expression of its own gene(s) in a negative feedback fashion. The chain is Phytochrome A (PHYA1) from Zea mays (Maize).